The following is an 87-amino-acid chain: Large ribosomal subunit protein bL27 (87 aa).

The interval 1-21 (MAHKKGGGSTRNGRDSASKRL) is disordered.

The protein belongs to the bacterial ribosomal protein bL27 family.

The protein is Large ribosomal subunit protein bL27 of Amoebophilus asiaticus (strain 5a2).